The sequence spans 238 residues: MTEYIQDAIPAKLAIAIANPIFPQLDSQLRAGRHISIEMLDEHAFLMDFQTELESFYRRYHVDLIRAPEGFFYLRPKASTLIARSAMSEMEMLVGKVLCYLYLSPERLAQQGIFSQDDVYEELLNLADENKLLKAVNPRSTGSDLDRAKLAEKVGGALRRLARIGIITRVGEQNSKKFIISEAVFRFGADVRAGDDPREVQLRLIRDGEATTPTLLTTEAIEFAEDGARDELEESEAE.

Belongs to the MukE family. As to quaternary structure, interacts, and probably forms a ternary complex, with MukF and MukB. The complex formation is stimulated by calcium or magnesium.

The protein resides in the cytoplasm. It is found in the nucleoid. Involved in chromosome condensation, segregation and cell cycle progression. May participate in facilitating chromosome segregation by condensation DNA from both sides of a centrally located replisome during cell division. Probably acts via its interaction with MukB and MukF. This Haemophilus ducreyi (strain 35000HP / ATCC 700724) protein is Chromosome partition protein MukE.